The sequence spans 140 residues: Methylglyoxal synthase (140 aa).

Residues 1–140 form the MGS-like domain; sequence MRSKPRIALI…DQAAADDAAP (140 aa). Substrate is bound by residues His-12, Lys-16, 38-41, and 58-59; these read TGTT and SG. Residue Asp-64 is the Proton donor/acceptor of the active site. His-91 lines the substrate pocket.

The protein belongs to the methylglyoxal synthase family.

It carries out the reaction dihydroxyacetone phosphate = methylglyoxal + phosphate. Its function is as follows. Catalyzes the formation of methylglyoxal from dihydroxyacetone phosphate. The polypeptide is Methylglyoxal synthase (Cupriavidus metallidurans (strain ATCC 43123 / DSM 2839 / NBRC 102507 / CH34) (Ralstonia metallidurans)).